Here is a 256-residue protein sequence, read N- to C-terminus: Phosphoribosylaminoimidazole-succinocarboxamide synthase (256 aa).

Belongs to the SAICAR synthetase family.

It carries out the reaction 5-amino-1-(5-phospho-D-ribosyl)imidazole-4-carboxylate + L-aspartate + ATP = (2S)-2-[5-amino-1-(5-phospho-beta-D-ribosyl)imidazole-4-carboxamido]succinate + ADP + phosphate + 2 H(+). Its pathway is purine metabolism; IMP biosynthesis via de novo pathway; 5-amino-1-(5-phospho-D-ribosyl)imidazole-4-carboxamide from 5-amino-1-(5-phospho-D-ribosyl)imidazole-4-carboxylate: step 1/2. This is Phosphoribosylaminoimidazole-succinocarboxamide synthase from Synechococcus sp. (strain JA-3-3Ab) (Cyanobacteria bacterium Yellowstone A-Prime).